The sequence spans 224 residues: Ribosomal RNA large subunit methyltransferase E (224 aa).

G60, W62, D93, D109, and D137 together coordinate S-adenosyl-L-methionine. K177 acts as the Proton acceptor in catalysis.

The protein belongs to the class I-like SAM-binding methyltransferase superfamily. RNA methyltransferase RlmE family.

It is found in the cytoplasm. The enzyme catalyses uridine(2552) in 23S rRNA + S-adenosyl-L-methionine = 2'-O-methyluridine(2552) in 23S rRNA + S-adenosyl-L-homocysteine + H(+). Specifically methylates the uridine in position 2552 of 23S rRNA at the 2'-O position of the ribose in the fully assembled 50S ribosomal subunit. This chain is Ribosomal RNA large subunit methyltransferase E, found in Polynucleobacter asymbioticus (strain DSM 18221 / CIP 109841 / QLW-P1DMWA-1) (Polynucleobacter necessarius subsp. asymbioticus).